The chain runs to 247 residues: MSSNTPSQLTRDLRFFLTVPHGCSYLPDREATTLFLDPQEQPGQGVYDALALLGFRRSGRHLYRPHCEGCRACISVRIPVEDFTPKRTQRKLISRNVDLETRMLPAAFYEEHYALYARYIRTRHADGDMYPPSHEQYRTFLTLDHPYARLIEFRLQGQLLGVAATDLLSHGVSAIYTFFDPSPAFERRSLGTYAILHQIELARRLGRPHVYLGYWIRQCRKMSYKQDFEPLEYLDGRHWRRQIPLVE.

Belongs to the R-transferase family. Bpt subfamily.

It localises to the cytoplasm. The enzyme catalyses N-terminal L-glutamyl-[protein] + L-leucyl-tRNA(Leu) = N-terminal L-leucyl-L-glutamyl-[protein] + tRNA(Leu) + H(+). It carries out the reaction N-terminal L-aspartyl-[protein] + L-leucyl-tRNA(Leu) = N-terminal L-leucyl-L-aspartyl-[protein] + tRNA(Leu) + H(+). Functionally, functions in the N-end rule pathway of protein degradation where it conjugates Leu from its aminoacyl-tRNA to the N-termini of proteins containing an N-terminal aspartate or glutamate. The chain is Aspartate/glutamate leucyltransferase from Chromohalobacter salexigens (strain ATCC BAA-138 / DSM 3043 / CIP 106854 / NCIMB 13768 / 1H11).